Here is a 181-residue protein sequence, read N- to C-terminus: MRLVMLGGPGSGKSTQSHNLSQELKLPVISMGGILREAIANATPLGIKAKPYVERGDLLPDPMMIEFIQQRLVQEDGGQGWILEGYPRTAFQAEELDFLLEDLGQPLDWALYLKIDEATMVERSLNRSLFDDHPEAITTRIGKFHEYTVPLLEYYAAKQNLLTVNAYPEVDQVTKLILARL.

10-15 (GSGKST) lines the ATP pocket. Residues 30-59 (SMGGILREAIANATPLGIKAKPYVERGDLL) form an NMP region. AMP is bound by residues Arg36, 57 to 59 (DLL), 85 to 88 (GYPR), and Gln92. An LID region spans residues 126 to 132 (NRSLFDD). Position 127 (Arg127) interacts with ATP. Arg140 contacts AMP. Residue Pro168 coordinates ATP.

Belongs to the adenylate kinase family. In terms of assembly, monomer.

Its subcellular location is the cytoplasm. The enzyme catalyses AMP + ATP = 2 ADP. It participates in purine metabolism; AMP biosynthesis via salvage pathway; AMP from ADP: step 1/1. Catalyzes the reversible transfer of the terminal phosphate group between ATP and AMP. Plays an important role in cellular energy homeostasis and in adenine nucleotide metabolism. The chain is Adenylate kinase 2 from Synechocystis sp. (strain ATCC 27184 / PCC 6803 / Kazusa).